The sequence spans 34 residues: uncharacterized protein (34 aa).

Residues 1–34 (MRLRRLFKQPSTRVLGVTNCPRQQGHQKRREQPD) are disordered. Basic residues predominate over residues 25 to 34 (GHQKRREQPD).

This is an uncharacterized protein from Schizosaccharomyces pombe (strain 972 / ATCC 24843) (Fission yeast).